The sequence spans 204 residues: Large ribosomal subunit protein bL25 (204 aa).

Belongs to the bacterial ribosomal protein bL25 family. CTC subfamily. As to quaternary structure, part of the 50S ribosomal subunit; part of the 5S rRNA/L5/L18/L25 subcomplex. Contacts the 5S rRNA. Binds to the 5S rRNA independently of L5 and L18.

Its function is as follows. This is one of the proteins that binds to the 5S RNA in the ribosome where it forms part of the central protuberance. The polypeptide is Large ribosomal subunit protein bL25 (Wolbachia sp. subsp. Brugia malayi (strain TRS)).